The chain runs to 402 residues: S-adenosylmethionine synthase (402 aa).

Position 15 (His15) interacts with ATP. Asp17 is a binding site for Mg(2+). K(+) is bound at residue Glu43. 2 residues coordinate L-methionine: Glu56 and Gln99. Residues 99–109 (QSPDIAQGVDT) are flexible loop. ATP contacts are provided by residues 174 to 176 (DGK), 247 to 248 (RF), Asp256, 262 to 263 (RK), Ala279, and Lys283. Asp256 contacts L-methionine. Lys287 contributes to the L-methionine binding site.

This sequence belongs to the AdoMet synthase family. Homotetramer; dimer of dimers. The cofactor is Mg(2+). K(+) serves as cofactor.

The protein resides in the cytoplasm. The enzyme catalyses L-methionine + ATP + H2O = S-adenosyl-L-methionine + phosphate + diphosphate. It participates in amino-acid biosynthesis; S-adenosyl-L-methionine biosynthesis; S-adenosyl-L-methionine from L-methionine: step 1/1. In terms of biological role, catalyzes the formation of S-adenosylmethionine (AdoMet) from methionine and ATP. The overall synthetic reaction is composed of two sequential steps, AdoMet formation and the subsequent tripolyphosphate hydrolysis which occurs prior to release of AdoMet from the enzyme. This Streptomyces coelicolor (strain ATCC BAA-471 / A3(2) / M145) protein is S-adenosylmethionine synthase.